The sequence spans 177 residues: ATP-dependent protease subunit HslV (177 aa).

Thr-2 is a catalytic residue. The Na(+) site is built by Gly-158, Cys-161, and Thr-164.

Belongs to the peptidase T1B family. HslV subfamily. A double ring-shaped homohexamer of HslV is capped on each side by a ring-shaped HslU homohexamer. The assembly of the HslU/HslV complex is dependent on binding of ATP.

It is found in the cytoplasm. The catalysed reaction is ATP-dependent cleavage of peptide bonds with broad specificity.. Its activity is regulated as follows. Allosterically activated by HslU binding. Protease subunit of a proteasome-like degradation complex believed to be a general protein degrading machinery. This chain is ATP-dependent protease subunit HslV, found in Pseudomonas aeruginosa (strain LESB58).